The following is a 285-amino-acid chain: Tryptophan synthase alpha chain (285 aa).

Active-site proton acceptor residues include Glu-53 and Asp-64.

This sequence belongs to the TrpA family. In terms of assembly, tetramer of two alpha and two beta chains.

It carries out the reaction (1S,2R)-1-C-(indol-3-yl)glycerol 3-phosphate + L-serine = D-glyceraldehyde 3-phosphate + L-tryptophan + H2O. The protein operates within amino-acid biosynthesis; L-tryptophan biosynthesis; L-tryptophan from chorismate: step 5/5. Functionally, the alpha subunit is responsible for the aldol cleavage of indoleglycerol phosphate to indole and glyceraldehyde 3-phosphate. The sequence is that of Tryptophan synthase alpha chain from Bordetella pertussis (strain Tohama I / ATCC BAA-589 / NCTC 13251).